The chain runs to 670 residues: DNA ligase (670 aa).

Residues Asp33–Asp37, Ser82–Leu83, and Glu114 contribute to the NAD(+) site. Lys116 acts as the N6-AMP-lysine intermediate in catalysis. NAD(+) is bound by residues Arg137, Glu174, Lys291, and Lys315. Zn(2+) is bound by residues Cys409, Cys412, Cys427, and Cys433. Residues Gly593 to Lys670 form the BRCT domain.

Belongs to the NAD-dependent DNA ligase family. LigA subfamily. The cofactor is Mg(2+). Mn(2+) serves as cofactor.

The catalysed reaction is NAD(+) + (deoxyribonucleotide)n-3'-hydroxyl + 5'-phospho-(deoxyribonucleotide)m = (deoxyribonucleotide)n+m + AMP + beta-nicotinamide D-nucleotide.. Functionally, DNA ligase that catalyzes the formation of phosphodiester linkages between 5'-phosphoryl and 3'-hydroxyl groups in double-stranded DNA using NAD as a coenzyme and as the energy source for the reaction. It is essential for DNA replication and repair of damaged DNA. This is DNA ligase from Vibrio campbellii (strain ATCC BAA-1116).